The following is a 130-amino-acid chain: uncharacterized protein (130 aa).

The region spanning 19-73 (IYSLRLAKGLSRQQLAEVIDVTHQQLQKYEKAINRISVGRLVLIAEALDRNIDYF) is the HTH cro/C1-type domain. A DNA-binding region (H-T-H motif) is located at residues 30 to 49 (RQQLAEVIDVTHQQLQKYEK).

This is an uncharacterized protein from Rickettsia prowazekii (strain Madrid E).